The chain runs to 225 residues: GrpE protein homolog 2, mitochondrial (225 aa).

Residues 1-32 constitute a mitochondrion transit peptide; sequence MAVRSLWACRLRVQRLLAWSAAWESKGWPLPF. An N6-acetyllysine modification is found at K142.

The protein belongs to the GrpE family. Probable component of the PAM complex at least composed of a mitochondrial HSP70 protein, GRPEL1 or GRPEL2, TIMM44, TIMM16/PAM16 and TIMM14/DNAJC19.

The protein resides in the mitochondrion matrix. Functionally, essential component of the PAM complex, a complex required for the translocation of transit peptide-containing proteins from the inner membrane into the mitochondrial matrix in an ATP-dependent manner. Seems to control the nucleotide-dependent binding of mitochondrial HSP70 to substrate proteins. Stimulates ATPase activity of mt-HSP70. May also serve to modulate the interconversion of oligomeric (inactive) and monomeric (active) forms of mt-HSP70. This is GrpE protein homolog 2, mitochondrial (GRPEL2) from Pongo abelii (Sumatran orangutan).